The sequence spans 461 residues: MNLTLDHTTLHRAAKYFMDSGKAASHEAAMNLLQQFGLTIYVGEEIRSSAAHQIALLTIVNVTRRTLLGGVEVIGLPDCDSLTALAPNTGLKEAVMALGGTPVAVARPEWPTALIGSVEDYSNKDTAWRVTWEGWRAGAAPLMIGDRLSEDNSMALAPALAAAVCAGEVFSHYAGDHPMAGRRTAGLSLWQPGADWLDVDESEPELAFLPSNLWIIGLGNLGQAFAWLLALMPYETPQELQLVLQDYDRIAPSNDSTSLLSYKHDTNKMKARVVADWLDKRGFTTFIEERRFGPWTKRHADEPGVALCGVDNALARSALDQAGFPLIVEAGLGGGPQAFRSLGIHTFPSSRTAAEIWAKQVALADTSTEDMPAYQALKKSGIDACGLTQLASRTVGVPFVGLIAACLAMSELLRRLHGGKAFEFIAGSTATLQDIEFGTLHAPPYAHGYTRAMPMGWPTAP.

Cysteine 385 (glycyl thioester intermediate) is an active-site residue.

In terms of biological role, component of the Bil (bacterial ISG15-like) antiviral defense system, composed of BilA, BilB, BilC and BilD. The Bil system specifically conjugates a ubiquitin-like moiety (bilA) to the bacteriophage central tail fiber (CTF, or tip attachment protein J) via reactions involving E1 (bilD) and E2 (bilB). Modifies CTF of phage SECphi27 and SECphi4, which probably interferes with assembly of the phage tail. Also modifies T5 baseplate hub protein pb3 (gene D16), but not gp27 of phage T6 (Bil defends against T6). BilD (E1) catalyzes the first step in conjugation. Activates ubiquitin-like BilA by first adenylating its C-terminal glycine residue with ATP, and then conjugates it to the side chain of a cysteine residue in E1 (this protein), yielding a ubiquitin-E1 thioester and free AMP. Bil-encoding bacteria produce mostly defective phage SECphi27, many of which have phage assembly defects, including no tails. SECphi27 phage progeny produced in E.coli with the Bil system inject less DNA into naive host cells, maybe because the phage are less able to adsorb and inject their DNA into host cells. Functionally, expression of the Bil system in E.coli (strain MG1655) confers about 100-fold resistance to phage SECphi27, SECphi18, SECphi6, SECphi4 and T5, but not to SECphi17. When cells expressing the Bil system are infected by phage SECphi27 at low multiplicity of infection (0.03 MOI) the culture survives, at 3.0 MOI the culture collapses at the same time as cells without the Bil system. In Collimonas sp. (strain OK412), this protein is Bacterial E1-like protein BilD.